Here is a 93-residue protein sequence, read N- to C-terminus: Acyl carrier protein AcpXL (93 aa).

Residues 2 to 88 (STTFDKVAKI…NLCAKIDALV (87 aa)) enclose the Carrier domain. Serine 37 carries the post-translational modification O-(pantetheine 4'-phosphoryl)serine.

In terms of processing, 4'-phosphopantetheine is transferred from CoA to a specific serine of apo-ACP by AcpS. This modification is essential for activity because fatty acids are bound in thioester linkage to the sulfhydryl of the prosthetic group.

The protein resides in the cytoplasm. The protein operates within glycolipid biosynthesis; KDO(2)-lipid A biosynthesis. Carrier of the growing fatty acid chain in fatty acid biosynthesis. Is involved in the transfer of long hydroxylated fatty acids to lipid A. This is Acyl carrier protein AcpXL (acpXL) from Mesorhizobium japonicum (strain LMG 29417 / CECT 9101 / MAFF 303099) (Mesorhizobium loti (strain MAFF 303099)).